Reading from the N-terminus, the 123-residue chain is Large ribosomal subunit protein bL12 (123 aa).

It belongs to the bacterial ribosomal protein bL12 family. In terms of assembly, homodimer. Part of the ribosomal stalk of the 50S ribosomal subunit. Forms a multimeric L10(L12)X complex, where L10 forms an elongated spine to which 2 to 4 L12 dimers bind in a sequential fashion. Binds GTP-bound translation factors.

Its function is as follows. Forms part of the ribosomal stalk which helps the ribosome interact with GTP-bound translation factors. Is thus essential for accurate translation. This Bartonella quintana (strain Toulouse) (Rochalimaea quintana) protein is Large ribosomal subunit protein bL12.